The primary structure comprises 288 residues: Bifunctional protein FolD (288 aa).

Residues glycine 163–serine 165, serine 188, and isoleucine 229 each bind NADP(+).

Belongs to the tetrahydrofolate dehydrogenase/cyclohydrolase family. In terms of assembly, homodimer.

The catalysed reaction is (6R)-5,10-methylene-5,6,7,8-tetrahydrofolate + NADP(+) = (6R)-5,10-methenyltetrahydrofolate + NADPH. It catalyses the reaction (6R)-5,10-methenyltetrahydrofolate + H2O = (6R)-10-formyltetrahydrofolate + H(+). The protein operates within one-carbon metabolism; tetrahydrofolate interconversion. Functionally, catalyzes the oxidation of 5,10-methylenetetrahydrofolate to 5,10-methenyltetrahydrofolate and then the hydrolysis of 5,10-methenyltetrahydrofolate to 10-formyltetrahydrofolate. The sequence is that of Bifunctional protein FolD from Campylobacter curvus (strain 525.92).